Reading from the N-terminus, the 659-residue chain is Cytochrome bo(3) ubiquinol oxidase subunit 1 (659 aa).

The Extracellular portion of the chain corresponds to 1 to 14 (MFGKLTLKAIPVDE). The chain crosses the membrane as a helical span at residues 15-35 (PIIMVTYISIILIALFISFSI). Topologically, residues 36–58 (TYFKKWKYLWYEWFTTVDHKKIS) are cytoplasmic. Residues 59–79 (IMYGILAFIMLFRGFVDAILM) traverse the membrane as a helical segment. A ubiquinone contacts are provided by R71, D75, and H98. Residues 80 to 106 (RTQQVIASSGNTGFLPPHHYDQIFTAH) lie on the Extracellular side of the membrane. Heme b is bound at residue H106. A helical membrane pass occupies residues 107–127 (GVIMIFFVAMPLVIGLMNLVV). Over 128–145 (PLQIGARDVAFPFLNNLS) the chain is Cytoplasmic. A helical transmembrane segment spans residues 146 to 166 (FWLNVSGAILLTLSLGIGEFA). At 167–189 (QTGWLAYPPLSEVKYSPGVGVDY) the chain is on the extracellular side. Heme b is bound at residue W170. Residues 190-210 (WIWSLQISGVGTTLTGINFLI) traverse the membrane as a helical segment. The Cytoplasmic portion of the chain corresponds to 211–225 (TILKMRAPGMCFFKM). The helical transmembrane segment at 226-246 (PVFTWAALCTNILIVISFPVL) threads the bilayer. At 247 to 277 (TTTLLLLTLDRCFDFHFFTNNFGGNPMMYVN) the chain is on the extracellular side. Residues 278 to 298 (LIWIWGHPEVYILVLPVFGVF) form a helical membrane-spanning segment. Residue H284 coordinates Cu(2+). The 1'-histidyl-3'-tyrosine (His-Tyr) cross-link spans 284–288 (HPEVY). Y288 is a binding site for Fe(II)-heme o. Topologically, residues 299-309 (SEVVATFSKKR) are cytoplasmic. Residues 310-330 (LFGYVSLVWATLAITILSFIV) form a helical membrane-spanning segment. The Extracellular portion of the chain corresponds to 331 to 347 (WLHHFFTMGAGSNVNAF). 2 residues coordinate Cu(2+): H333 and H334. The helical transmembrane segment at 348 to 368 (FGITTMIIAIPTGVKIFNWLF) threads the bilayer. Over 369-380 (TMYQGRVHMHSS) the chain is Cytoplasmic. A helical membrane pass occupies residues 381 to 401 (MLWTIGFLITFSIGGMTGVLL). The Extracellular segment spans residues 402–413 (SIPPADFILHNS). Positions 411 and 419 each coordinate Fe(II)-heme o. A helical membrane pass occupies residues 414 to 434 (LFLVAHFHNVIIGGVVFGCFA). H421 contacts heme b. At 435–456 (GINYWFPKLFGFILNELWGKRA) the chain is on the cytoplasmic side. Residues 457 to 477 (FWFWIIGFFTAFMPLYFLGFM) traverse the membrane as a helical segment. At 478-490 (GMTRRLSQNIDIE) the chain is on the extracellular side. Positions 481 and 482 each coordinate heme b. The helical transmembrane segment at 491–511 (FHFLLSIAAIGAILIGIGILC) threads the bilayer. Residues 512 to 580 (QIIQFWVSVR…KNQVQKKQYS (69 aa)) are Cytoplasmic-facing. The chain crosses the membrane as a helical span at residues 581-601 (AIHMPKNTGLGIFISFFSLLF). Topologically, residues 602–605 (GFSA) are extracellular. The chain crosses the membrane as a helical span at residues 606–626 (VWNIIWLSFLSFLVVIISLIF). At 627 to 659 (KSIDENTEYTVSVKEIESIENRHLENVQKAGLK) the chain is on the cytoplasmic side.

This sequence belongs to the heme-copper respiratory oxidase family. In terms of assembly, the cytochrome bo(3) ubiquinol oxidase complex is a heterooctamer of two A chains, two B chains, two C chains and two D chains. It depends on Cu(2+) as a cofactor. Requires heme b as cofactor. Fe(II)-heme o is required as a cofactor.

The protein localises to the cell membrane. It carries out the reaction 2 a ubiquinol + O2 + n H(+)(in) = 2 a ubiquinone + 2 H2O + n H(+)(out). Cytochrome bo(3) ubiquinol oxidase is the terminal enzyme in the aerobic respiratory chain. Catalyzes the four-electron reduction of O2 to water, using a ubiquinol as a membrane soluble electron donor for molecular oxygen reduction. Has proton pump activity across the membrane in addition to electron transfer, pumping 2 protons/electron and generating a proton motive force. All the redox centers of this enzyme complex are located within the largest subunit, subunit I. Protons are probably pumped via D- and K- channels found in this subunit. The sequence is that of Cytochrome bo(3) ubiquinol oxidase subunit 1 (cyoB) from Buchnera aphidicola subsp. Schizaphis graminum (strain Sg).